We begin with the raw amino-acid sequence, 311 residues long: DNA repair and recombination protein RadA (311 aa).

Position 104–111 (104–111 (GEFGSGKS)) interacts with ATP.

This sequence belongs to the eukaryotic RecA-like protein family.

Its function is as follows. Involved in DNA repair and in homologous recombination. Binds and assemble on single-stranded DNA to form a nucleoprotein filament. Hydrolyzes ATP in a ssDNA-dependent manner and promotes DNA strand exchange between homologous DNA molecules. The sequence is that of DNA repair and recombination protein RadA from Methanosphaera stadtmanae (strain ATCC 43021 / DSM 3091 / JCM 11832 / MCB-3).